Here is a 669-residue protein sequence, read N- to C-terminus: Elongation factor G 2 (669 aa).

Residues 1–276 (MGIRNIGIMA…SIVDYLPSPF (276 aa)) form the tr-type G domain. GTP contacts are provided by residues 10–17 (AHIDAGKT), 74–78 (DTPGH), and 128–131 (NKMD).

It belongs to the TRAFAC class translation factor GTPase superfamily. Classic translation factor GTPase family. EF-G/EF-2 subfamily.

The protein localises to the cytoplasm. Catalyzes the GTP-dependent ribosomal translocation step during translation elongation. During this step, the ribosome changes from the pre-translocational (PRE) to the post-translocational (POST) state as the newly formed A-site-bound peptidyl-tRNA and P-site-bound deacylated tRNA move to the P and E sites, respectively. Catalyzes the coordinated movement of the two tRNA molecules, the mRNA and conformational changes in the ribosome. This chain is Elongation factor G 2 (fusA2), found in Borreliella afzelii (strain PKo) (Borrelia afzelii).